A 65-amino-acid chain; its full sequence is Large ribosomal subunit protein uL29 (65 aa).

Positions 30–49 are disordered; that stretch reads ERSSVAMGGAPSSPGKMRSI.

The protein belongs to the universal ribosomal protein uL29 family.

This is Large ribosomal subunit protein uL29 from Picrophilus torridus (strain ATCC 700027 / DSM 9790 / JCM 10055 / NBRC 100828 / KAW 2/3).